The following is a 248-amino-acid chain: Probable transcriptional regulatory protein Atu3727 (248 aa).

The segment at 1–21 (MAGHSQFKNIMHRKGKQDSVR) is disordered.

The protein belongs to the TACO1 family.

Its subcellular location is the cytoplasm. The sequence is that of Probable transcriptional regulatory protein Atu3727 from Agrobacterium fabrum (strain C58 / ATCC 33970) (Agrobacterium tumefaciens (strain C58)).